Reading from the N-terminus, the 310-residue chain is HTH-type transcriptional activator TtdR (310 aa).

Residues 6–63 (PLAKDLQVLVEIVHSGSFSAAAATLGQTPAFVTKRIQILENTLATTLLNRSARGVALT) enclose the HTH lysR-type domain. The H-T-H motif DNA-binding region spans 23 to 42 (FSAAAATLGQTPAFVTKRIQ).

Belongs to the LysR transcriptional regulatory family.

Its function is as follows. Positive regulator required for L-tartrate-dependent anaerobic growth on glycerol. Induces expression of the ttdA-ttdB-ygjE operon. This Escherichia coli O6:H1 (strain CFT073 / ATCC 700928 / UPEC) protein is HTH-type transcriptional activator TtdR (ttdR).